The following is a 230-amino-acid chain: Enolase-phosphatase E1 (230 aa).

The protein belongs to the HAD-like hydrolase superfamily. MasA/MtnC family. As to quaternary structure, monomer. It depends on Mg(2+) as a cofactor.

It catalyses the reaction 5-methylsulfanyl-2,3-dioxopentyl phosphate + H2O = 1,2-dihydroxy-5-(methylsulfanyl)pent-1-en-3-one + phosphate. The protein operates within amino-acid biosynthesis; L-methionine biosynthesis via salvage pathway; L-methionine from S-methyl-5-thio-alpha-D-ribose 1-phosphate: step 3/6. It functions in the pathway amino-acid biosynthesis; L-methionine biosynthesis via salvage pathway; L-methionine from S-methyl-5-thio-alpha-D-ribose 1-phosphate: step 4/6. Its function is as follows. Bifunctional enzyme that catalyzes the enolization of 2,3-diketo-5-methylthiopentyl-1-phosphate (DK-MTP-1-P) into the intermediate 2-hydroxy-3-keto-5-methylthiopentenyl-1-phosphate (HK-MTPenyl-1-P), which is then dephosphorylated to form the acireductone 1,2-dihydroxy-3-keto-5-methylthiopentene (DHK-MTPene). In Marinobacter nauticus (strain ATCC 700491 / DSM 11845 / VT8) (Marinobacter aquaeolei), this protein is Enolase-phosphatase E1.